We begin with the raw amino-acid sequence, 456 residues long: tRNA-2-methylthio-N(6)-dimethylallyladenosine synthase (456 aa).

One can recognise an MTTase N-terminal domain in the interval 2 to 119; sequence KKVFIKTYGC…LPDLIAARRR (118 aa). [4Fe-4S] cluster contacts are provided by cysteine 11, cysteine 48, cysteine 82, cysteine 156, cysteine 160, and cysteine 163. The Radical SAM core domain occupies 142 to 375; the sequence is RVDGASAYVS…QATIEENVAR (234 aa). The TRAM domain maps to 378-448; the sequence is QGMVGSVQRI…PHSLRGEVAE (71 aa).

Belongs to the methylthiotransferase family. MiaB subfamily. Monomer. The cofactor is [4Fe-4S] cluster.

The protein resides in the cytoplasm. It carries out the reaction N(6)-dimethylallyladenosine(37) in tRNA + (sulfur carrier)-SH + AH2 + 2 S-adenosyl-L-methionine = 2-methylsulfanyl-N(6)-dimethylallyladenosine(37) in tRNA + (sulfur carrier)-H + 5'-deoxyadenosine + L-methionine + A + S-adenosyl-L-homocysteine + 2 H(+). Catalyzes the methylthiolation of N6-(dimethylallyl)adenosine (i(6)A), leading to the formation of 2-methylthio-N6-(dimethylallyl)adenosine (ms(2)i(6)A) at position 37 in tRNAs that read codons beginning with uridine. This chain is tRNA-2-methylthio-N(6)-dimethylallyladenosine synthase, found in Ralstonia pickettii (strain 12J).